Here is a 318-residue protein sequence, read N- to C-terminus: D-alanine--D-alanine ligase (318 aa).

In terms of domain architecture, ATP-grasp spans 101-307 (KKIIQYEGLP…FPDLIEKLVE (207 aa)). 135–190 (CREMGLPLVVKAPTQGSTIGMSFVHKEEDMAGALELAYDYDPVALVEQFIRGTEVT) is a binding site for ATP. The Mg(2+) site is built by Asp261, Glu274, and Asn276.

The protein belongs to the D-alanine--D-alanine ligase family. Requires Mg(2+) as cofactor. The cofactor is Mn(2+).

The protein resides in the cytoplasm. The catalysed reaction is 2 D-alanine + ATP = D-alanyl-D-alanine + ADP + phosphate + H(+). Its pathway is cell wall biogenesis; peptidoglycan biosynthesis. Cell wall formation. The sequence is that of D-alanine--D-alanine ligase from Pelotomaculum thermopropionicum (strain DSM 13744 / JCM 10971 / SI).